The chain runs to 130 residues: Small ribosomal subunit protein uS8 (130 aa).

Lys-88 is modified (N6-succinyllysine).

It belongs to the universal ribosomal protein uS8 family. Component of the 40S ribosomal subunit. Part of the small subunit (SSU) processome, composed of more than 70 proteins and the RNA chaperone small nucleolar RNA (snoRNA) U3.

It is found in the cytoplasm. The protein localises to the nucleus. Its subcellular location is the nucleolus. Its function is as follows. Component of the small ribosomal subunit. Part of the small subunit (SSU) processome, first precursor of the small eukaryotic ribosomal subunit. During the assembly of the SSU processome in the nucleolus, many ribosome biogenesis factors, an RNA chaperone and ribosomal proteins associate with the nascent pre-rRNA and work in concert to generate RNA folding, modifications, rearrangements and cleavage as well as targeted degradation of pre-ribosomal RNA by the RNA exosome. Required for proper erythropoiesis. This is Small ribosomal subunit protein uS8 (RPS15A) from Pongo abelii (Sumatran orangutan).